We begin with the raw amino-acid sequence, 60 residues long: Toxin C10S2C2 (60 aa).

4 disulfides stabilise this stretch: Cys-3–Cys-22, Cys-17–Cys-39, Cys-41–Cys-52, and Cys-53–Cys-58. The interval 41 to 48 (CPTAMWPY) is important for binding to L-type calcium channels.

This sequence belongs to the three-finger toxin family. Short-chain subfamily. L-type calcium blocker sub-subfamily. In terms of tissue distribution, expressed by the venom gland.

It localises to the secreted. Functionally, this specific blocker of the L-type calcium channel (Cav1/CACNA1) is a smooth muscle relaxant and an inhibitor of cardiac contractions. The polypeptide is Toxin C10S2C2 (Dendroaspis angusticeps (Eastern green mamba)).